A 189-amino-acid polypeptide reads, in one-letter code: Coatomer subunit zeta (189 aa).

Belongs to the adaptor complexes small subunit family. Oligomeric complex that consists of at least the alpha, beta, beta', gamma, delta, epsilon and zeta subunits.

The protein localises to the cytoplasm. It is found in the golgi apparatus membrane. The protein resides in the cytoplasmic vesicle. It localises to the COPI-coated vesicle membrane. Its function is as follows. The coatomer is a cytosolic protein complex that binds to dilysine motifs and reversibly associates with Golgi non-clathrin-coated vesicles, which further mediate biosynthetic protein transport from the ER, via the Golgi up to the trans Golgi network. Coatomer complex is required for budding from Golgi membranes, and is essential for the retrograde Golgi-to-ER transport of dilysine-tagged proteins. The zeta subunit may be involved in regulating the coat assembly and, hence, the rate of biosynthetic protein transport due to its association-dissociation properties with the coatomer complex. This Saccharomyces cerevisiae (strain ATCC 204508 / S288c) (Baker's yeast) protein is Coatomer subunit zeta (RET3).